The primary structure comprises 452 residues: Pup--protein ligase (452 aa).

Residue Glu-9 coordinates Mg(2+). Residue Arg-53 participates in ATP binding. Residue Tyr-55 participates in Mg(2+) binding. Asp-57 functions as the Proton acceptor in the catalytic mechanism. Glu-63 provides a ligand contact to Mg(2+). Thr-66 and Trp-419 together coordinate ATP.

Belongs to the Pup ligase/Pup deamidase family. Pup-conjugating enzyme subfamily.

It catalyses the reaction ATP + [prokaryotic ubiquitin-like protein]-L-glutamate + [protein]-L-lysine = ADP + phosphate + N(6)-([prokaryotic ubiquitin-like protein]-gamma-L-glutamyl)-[protein]-L-lysine.. Its pathway is protein degradation; proteasomal Pup-dependent pathway. The protein operates within protein modification; protein pupylation. In terms of biological role, catalyzes the covalent attachment of the prokaryotic ubiquitin-like protein modifier Pup to the proteasomal substrate proteins, thereby targeting them for proteasomal degradation. This tagging system is termed pupylation. The ligation reaction involves the side-chain carboxylate of the C-terminal glutamate of Pup and the side-chain amino group of a substrate lysine. The polypeptide is Pup--protein ligase (Rhodococcus jostii (strain RHA1)).